We begin with the raw amino-acid sequence, 410 residues long: TNF receptor-associated factor family protein DDB_G0279745 (410 aa).

The RING-type; degenerate zinc-finger motif lies at 27 to 67 (CVICSFPLFDGLQCKRGHGACKSCWEKIIGENGKKECHSCR). TRAF-type zinc fingers lie at residues 81-154 (YLEK…SLEQ) and 154-213 (QHQN…DESI). Residues 216 to 284 (LSNSIVEIQK…SMINKLDDSA (69 aa)) are a coiled coil.

This sequence belongs to the TNF receptor-associated factor family.

It localises to the cytoplasm. In terms of biological role, probable adapter protein and signal transducer that links members of the tumor necrosis factor receptor family to different signaling pathways by association with the receptor cytoplasmic domain and kinases. The polypeptide is TNF receptor-associated factor family protein DDB_G0279745 (Dictyostelium discoideum (Social amoeba)).